Consider the following 984-residue polypeptide: Lateral signaling target protein 2 homolog (984 aa).

Disordered stretches follow at residues 308 to 462 (PLGS…DTDE), 508 to 527 (YGTT…PSTS), 539 to 642 (RLRL…SSLS), and 749 to 900 (DNVF…SPPA). Composition is skewed to low complexity over residues 326 to 356 (TTSS…TTST), 369 to 380 (NNHNSNSNSSTN), 387 to 404 (TLRS…TPTA), and 412 to 433 (PSHS…PADW). Over residues 434-462 (SDGDDEDEDDDDIEVDEEDLESSDDDTDE) the composition is skewed to acidic residues. 2 positions are modified to phosphoserine: serine 544 and serine 545. The segment covering 571–611 (RESHSHRHHQRHHHHHHHRHSHQHQHRQPHPHRTTRSGRKR) has biased composition (basic residues). Low complexity predominate over residues 630 to 642 (LASGDTSAASSLS). Polar residues-rich tracts occupy residues 760-779 (ATGQ…TIDL) and 789-806 (SGAT…SRSL). At serine 805 the chain carries Phosphoserine. Low complexity-rich tracts occupy residues 811–869 (AASS…PVSA) and 886–899 (PSSA…LSPP). The FYVE-type zinc finger occupies 904 to 964 (DGKAPRCMAC…VCRDCYVREV (61 aa)). 8 residues coordinate Zn(2+): cysteine 910, cysteine 913, cysteine 926, cysteine 929, cysteine 934, cysteine 937, cysteine 956, and cysteine 959.

Belongs to the lst-2 family.

In terms of biological role, negative regulator of epidermal growth factor receptor (EGFR) signaling. This is Lateral signaling target protein 2 homolog from Drosophila yakuba (Fruit fly).